Here is a 270-residue protein sequence, read N- to C-terminus: Monocyte to macrophage differentiation factor 2 (270 aa).

The Cytoplasmic segment spans residues 1 to 38 (MFAPRLLDFQKTKYARFMNHRVPAHKRYQPTEYEHAAN). Residues 39-59 (CATHAFWIIPSILGSSNLYFL) form a helical membrane-spanning segment. Topologically, residues 60–65 (SDDDWE) are lumenal. Residues 66–86 (TISAWIYGLGLCGLFVVSTVF) traverse the membrane as a helical segment. The Cytoplasmic portion of the chain corresponds to 87 to 102 (HTISWKKSHLRMVEHC). The chain crosses the membrane as a helical span at residues 103 to 123 (LHMFDRMVIYFFIAASYAPWL). Residues 124–132 (NLRELGPWA) lie on the Lumenal side of the membrane. Residues 133–153 (SHMRWLVWIMASVGTIYVFFF) traverse the membrane as a helical segment. The Cytoplasmic portion of the chain corresponds to 154 to 182 (HERTGSCVQFLRGEACPKAGTACLPARYK). Residues 183–203 (LVELLCYVVMGFFPALVILSM) traverse the membrane as a helical segment. The Lumenal segment spans residues 204 to 205 (PN). Residues 206 to 226 (TEGIWELVTGGVFYCLGMVFF) form a helical membrane-spanning segment. The Cytoplasmic portion of the chain corresponds to 227–233 (KSDGRIP). The chain crosses the membrane as a helical span at residues 234–254 (FAHAIWHLFVAFGAGTHYYAI). Residues 255–270 (WRYLYLPSTLQTKVSK) are Lumenal-facing.

This sequence belongs to the ADIPOR family. Shows restricted expression with highest levels in brain and testis.

The protein localises to the golgi apparatus membrane. This is Monocyte to macrophage differentiation factor 2 from Homo sapiens (Human).